A 432-amino-acid chain; its full sequence is Enolase (432 aa).

Q168 serves as a coordination point for (2R)-2-phosphoglycerate. Catalysis depends on E210, which acts as the Proton donor. Mg(2+)-binding residues include D247, E288, and D315. (2R)-2-phosphoglycerate contacts are provided by K340, R369, S370, and K391. The Proton acceptor role is filled by K340.

This sequence belongs to the enolase family. Mg(2+) is required as a cofactor.

It localises to the cytoplasm. Its subcellular location is the secreted. The protein localises to the cell surface. The catalysed reaction is (2R)-2-phosphoglycerate = phosphoenolpyruvate + H2O. Its pathway is carbohydrate degradation; glycolysis; pyruvate from D-glyceraldehyde 3-phosphate: step 4/5. Its function is as follows. Catalyzes the reversible conversion of 2-phosphoglycerate (2-PG) into phosphoenolpyruvate (PEP). It is essential for the degradation of carbohydrates via glycolysis. The sequence is that of Enolase from Microcystis aeruginosa (strain NIES-843 / IAM M-2473).